Reading from the N-terminus, the 679-residue chain is Methionine--tRNA ligase (679 aa).

Residues 15 to 25 carry the 'HIGH' region motif; the sequence is PYANGPIHLGH. Zn(2+)-binding residues include cysteine 146, cysteine 149, cysteine 159, and cysteine 162. The 'KMSKS' region signature appears at 332–336; sequence KMSKS. Lysine 335 lines the ATP pocket. The tRNA-binding domain occupies 578-679; that stretch reads DFAKIDLRIA…EGAQPGMKVK (102 aa).

This sequence belongs to the class-I aminoacyl-tRNA synthetase family. MetG type 1 subfamily. As to quaternary structure, homodimer. Zn(2+) is required as a cofactor.

Its subcellular location is the cytoplasm. It catalyses the reaction tRNA(Met) + L-methionine + ATP = L-methionyl-tRNA(Met) + AMP + diphosphate. Its function is as follows. Is required not only for elongation of protein synthesis but also for the initiation of all mRNA translation through initiator tRNA(fMet) aminoacylation. This Shewanella pealeana (strain ATCC 700345 / ANG-SQ1) protein is Methionine--tRNA ligase.